Consider the following 54-residue polypeptide: ATP synthase protein 8 (54 aa).

Residues Trp8–Val28 traverse the membrane as a helical segment.

It belongs to the ATPase protein 8 family. In terms of assembly, F-type ATPases have 2 components, CF(1) - the catalytic core - and CF(0) - the membrane proton channel.

The protein resides in the mitochondrion membrane. In terms of biological role, mitochondrial membrane ATP synthase (F(1)F(0) ATP synthase or Complex V) produces ATP from ADP in the presence of a proton gradient across the membrane which is generated by electron transport complexes of the respiratory chain. F-type ATPases consist of two structural domains, F(1) - containing the extramembraneous catalytic core and F(0) - containing the membrane proton channel, linked together by a central stalk and a peripheral stalk. During catalysis, ATP synthesis in the catalytic domain of F(1) is coupled via a rotary mechanism of the central stalk subunits to proton translocation. Part of the complex F(0) domain. Minor subunit located with subunit a in the membrane. This Paracentrotus lividus (Common sea urchin) protein is ATP synthase protein 8 (MT-ATP8).